The sequence spans 853 residues: E3 ubiquitin-protein ligase RNF216 (853 aa).

Disordered stretches follow at residues Thr33 to Val102, Pro125 to Asp152, and Pro165 to Leu228. The span at Gln53 to Tyr73 shows a compositional bias: acidic residues. Lys89 is covalently cross-linked (Glycyl lysine isopeptide (Lys-Gly) (interchain with G-Cter in SUMO2)). Residues Lys339 and Lys342 each participate in a glycyl lysine isopeptide (Lys-Gly) (interchain with G-Cter in SUMO2) cross-link. Ser407 is subject to Phosphoserine. Glycyl lysine isopeptide (Lys-Gly) (interchain with G-Cter in SUMO2) cross-links involve residues Lys413, Lys418, Lys436, Lys447, and Lys473. Residues Val463–Glu479 adopt a coiled-coil conformation. Positions Gln499 to Ser716 are TRIAD supradomain. Cys503, Cys506, Cys525, Cys528, Cys593, and Cys596 together coordinate Zn(2+). Residues Cys503–Cys552 form an RING-type 1 zinc finger. An IBR-type zinc finger spans residues Tyr571–Cys636. Lys607 is covalently cross-linked (Glycyl lysine isopeptide (Lys-Gly) (interchain with G-Cter in SUMO2)). The Zn(2+) site is built by Cys611, Cys616, Cys621, Cys624, His631, and Cys636. Glycyl lysine isopeptide (Lys-Gly) (interchain with G-Cter in SUMO2) cross-links involve residues Lys646 and Lys654. The Zn(2+) site is built by Cys663 and Cys666. An RING-type 2; atypical zinc finger spans residues Cys663–Cys691. The active site involves Cys676. Cys681, Cys683, Cys688, Cys691, His704, and Cys712 together coordinate Zn(2+). Residues Thr725–Thr751 adopt a coiled-coil conformation. Glycyl lysine isopeptide (Lys-Gly) (interchain with G-Cter in SUMO2) cross-links involve residues Lys753 and Lys761.

As to quaternary structure, interacts with UBE2L3 and to some extent with UBE2L6. Interacts with TRAF3, TLR3, TLR4, TLR5 and TLR9. Isoform 3/ZIN binds RIPK1. In terms of processing, auto-ubiquitinated. Post-translationally, phosphorylation at Ser-719 enhances acceptor ubiquitin binding and chain-type specificity towards 'Lys-63' di-ubiquitin but not di-ubiquitin with other linkage types.

It is found in the cytoplasm. The protein localises to the cytoplasmic vesicle. The protein resides in the clathrin-coated vesicle. It carries out the reaction S-ubiquitinyl-[E2 ubiquitin-conjugating enzyme]-L-cysteine + [acceptor protein]-L-lysine = [E2 ubiquitin-conjugating enzyme]-L-cysteine + N(6)-ubiquitinyl-[acceptor protein]-L-lysine.. The protein operates within protein modification; protein ubiquitination. Its activity is regulated as follows. Allosterically activated by 'Lys-63'-linked di-ubiquitin. In terms of biological role, E3 ubiquitin ligase which accepts ubiquitin from specific E2 ubiquitin-conjugating enzymes, and then transfers it to substrates promoting their ubiquitination. Plays a role in the regulation of antiviral responses by promoting the degradation of TRAF3, TLR4 and TLR9. In turn, down-regulates NF-kappa-B and IRF3 activation as well as beta interferon production. Also participates in the regulation of autophagy by ubiquitinating BECN1 leading to its degradation and autophagy inhibition. Plays a role in ARC-dependent synaptic plasticity by mediating ARC ubiquitination resulting in its rapid proteasomal degradation. Plays aso an essential role in spermatogenesis and male fertility. Mechanistically, regulates meiosis by promoting the degradation of PRKACB through the ubiquitin-mediated lysosome pathway. Modulates the gonadotropin-releasing hormone signal pathway by affecting the stability of STAU2 that is required for the microtubule-dependent transport of neuronal RNA from the cell body to the dendrite. In Mus musculus (Mouse), this protein is E3 ubiquitin-protein ligase RNF216 (Rnf216).